Consider the following 360-residue polypeptide: Probable cinnamyl alcohol dehydrogenase 1 (360 aa).

Zn(2+) is bound at residue Cys-47. Thr-49 lines the NADP(+) pocket. Zn(2+) is bound by residues His-69, Glu-70, Cys-100, Cys-103, Cys-106, Cys-114, and Cys-163. Residues Thr-167, 189 to 194, 212 to 217, Thr-252, Gly-276, and 299 to 301 contribute to the NADP(+) site; these read GLGGVG, SSSDKK, and SFI.

The protein belongs to the zinc-containing alcohol dehydrogenase family. As to quaternary structure, homodimer. Requires Zn(2+) as cofactor.

It carries out the reaction (E)-cinnamyl alcohol + NADP(+) = (E)-cinnamaldehyde + NADPH + H(+). The catalysed reaction is (E)-coniferol + NADP(+) = (E)-coniferaldehyde + NADPH + H(+). It catalyses the reaction (E)-sinapyl alcohol + NADP(+) = (E)-sinapaldehyde + NADPH + H(+). The enzyme catalyses (E)-4-coumaroyl alcohol + NADP(+) = (E)-4-coumaraldehyde + NADPH + H(+). It carries out the reaction (E)-caffeyl alcohol + NADP(+) = (E)-caffeyl aldehyde + NADPH + H(+). The protein operates within aromatic compound metabolism; phenylpropanoid biosynthesis. Its function is as follows. Involved in lignin biosynthesis. Catalyzes the final step specific for the production of lignin monomers. Catalyzes the NADPH-dependent reduction of coniferaldehyde, 5-hydroxyconiferaldehyde, sinapaldehyde, 4-coumaraldehyde and caffeyl aldehyde to their respective alcohols. The protein is Probable cinnamyl alcohol dehydrogenase 1 (CAD1) of Aralia cordata (Udo).